A 455-amino-acid chain; its full sequence is Transcription factor mokH (455 aa).

The tract at residues 1–22 (MALSPVQDPPSHTDKTMPRRAF) is disordered. The zn(2)-C6 fungal-type DNA-binding region spans 26–58 (CDRCHAQKIKCIGSEGAVARASCQRCQQAGLRC). 2 disordered regions span residues 68-113 (KLPK…DSSG) and 296-317 (LTPL…RSSV). Positions 75–88 (AESSPASSTAGLHT) are enriched in polar residues. The span at 89 to 113 (SSSDSSPPVPSDGLPLDLPGPDSSG) shows a compositional bias: low complexity.

It localises to the nucleus. Transcription factor that regulates the gene cluster that mediates the biosynthesis of monakolin K, also known as lovastatin, and which acts as a potent competitive inhibitor of HMG-CoA reductase. Monakolin K biosynthesis is performed in two stages. The first stage is catalyzed by the nonaketide synthase mokA, which belongs to type I polyketide synthases and catalyzes the iterative nine-step formation of the polyketide. This PKS stage is completed by the action of dehydrogenase mokE, which catalyzes the NADPH-dependent reduction of the unsaturated tetra-, penta- and heptaketide intermediates that arise during the mokA-mediated biosynthesis of the nonaketide chain and leads to dihydromonacolin L. Covalently bound dihydromonacolin L is released from mokA by the mokD esterase. Conversion of dihydromonacolin L into monacolin L and then monacolin J is subsequently performed with the participation of molecular oxygen and P450 monoogygenase mokC. Finally, mokF performs the conversion of monacoline J to monacoline K through the addition of the side-chain diketide moiety (2R)-2-methylbutanoate produced by the diketide synthase mokB. HMG-CoA reductase mokG may act as a down-regulator of monacolin K production. The protein is Transcription factor mokH of Monascus pilosus (Red mold).